Here is a 354-residue protein sequence, read N- to C-terminus: UDP-3-O-acylglucosamine N-acyltransferase (354 aa).

The active-site Proton acceptor is H245.

The protein belongs to the transferase hexapeptide repeat family. LpxD subfamily. As to quaternary structure, homotrimer.

The catalysed reaction is a UDP-3-O-[(3R)-3-hydroxyacyl]-alpha-D-glucosamine + a (3R)-hydroxyacyl-[ACP] = a UDP-2-N,3-O-bis[(3R)-3-hydroxyacyl]-alpha-D-glucosamine + holo-[ACP] + H(+). It participates in bacterial outer membrane biogenesis; LPS lipid A biosynthesis. Its function is as follows. Catalyzes the N-acylation of UDP-3-O-acylglucosamine using 3-hydroxyacyl-ACP as the acyl donor. Is involved in the biosynthesis of lipid A, a phosphorylated glycolipid that anchors the lipopolysaccharide to the outer membrane of the cell. This chain is UDP-3-O-acylglucosamine N-acyltransferase, found in Anaeromyxobacter dehalogenans (strain 2CP-1 / ATCC BAA-258).